The following is a 702-amino-acid chain: Polyribonucleotide nucleotidyltransferase (702 aa).

Residues aspartate 491 and aspartate 497 each coordinate Mg(2+). The KH domain maps to 558 to 618 (PKMKTFMIPV…TAIEKAYQLI (61 aa)). Residues 628–696 (GEKIIGPVVK…GKGKIKLQLI (69 aa)) enclose the S1 motif domain.

This sequence belongs to the polyribonucleotide nucleotidyltransferase family. Requires Mg(2+) as cofactor.

Its subcellular location is the cytoplasm. It catalyses the reaction RNA(n+1) + phosphate = RNA(n) + a ribonucleoside 5'-diphosphate. Its function is as follows. Involved in mRNA degradation. Catalyzes the phosphorolysis of single-stranded polyribonucleotides processively in the 3'- to 5'-direction. This Spiroplasma citri protein is Polyribonucleotide nucleotidyltransferase.